The chain runs to 127 residues: Glycine cleavage system H protein (127 aa).

Positions 22–104 (KVRIGITDFA…YEKAWMIVVE (83 aa)) constitute a Lipoyl-binding domain. Lys63 bears the N6-lipoyllysine mark.

Belongs to the GcvH family. The glycine cleavage system is composed of four proteins: P, T, L and H. It depends on (R)-lipoate as a cofactor.

The glycine cleavage system catalyzes the degradation of glycine. The H protein shuttles the methylamine group of glycine from the P protein to the T protein. Its function is as follows. Is also involved in protein lipoylation via its role as an octanoyl/lipoyl carrier protein intermediate. The polypeptide is Glycine cleavage system H protein (Bacillus licheniformis (strain ATCC 14580 / DSM 13 / JCM 2505 / CCUG 7422 / NBRC 12200 / NCIMB 9375 / NCTC 10341 / NRRL NRS-1264 / Gibson 46)).